The chain runs to 178 residues: Acireductone dioxygenase (178 aa).

The Fe(2+) site is built by histidine 100, histidine 102, glutamate 106, and histidine 145. The Ni(2+) site is built by histidine 100, histidine 102, glutamate 106, and histidine 145.

It belongs to the acireductone dioxygenase (ARD) family. Monomer. Requires Fe(2+) as cofactor. It depends on Ni(2+) as a cofactor.

The enzyme catalyses 1,2-dihydroxy-5-(methylsulfanyl)pent-1-en-3-one + O2 = 3-(methylsulfanyl)propanoate + CO + formate + 2 H(+). It carries out the reaction 1,2-dihydroxy-5-(methylsulfanyl)pent-1-en-3-one + O2 = 4-methylsulfanyl-2-oxobutanoate + formate + 2 H(+). The protein operates within amino-acid biosynthesis; L-methionine biosynthesis via salvage pathway; L-methionine from S-methyl-5-thio-alpha-D-ribose 1-phosphate: step 5/6. Functionally, catalyzes 2 different reactions between oxygen and the acireductone 1,2-dihydroxy-3-keto-5-methylthiopentene (DHK-MTPene) depending upon the metal bound in the active site. Fe-containing acireductone dioxygenase (Fe-ARD) produces formate and 2-keto-4-methylthiobutyrate (KMTB), the alpha-ketoacid precursor of methionine in the methionine recycle pathway. Ni-containing acireductone dioxygenase (Ni-ARD) produces methylthiopropionate, carbon monoxide and formate, and does not lie on the methionine recycle pathway. This chain is Acireductone dioxygenase (mtnD), found in Bacillus subtilis (strain 168).